Reading from the N-terminus, the 306-residue chain is Glutaminase (306 aa).

Serine 64, asparagine 115, glutamate 159, asparagine 166, tyrosine 190, tyrosine 242, and valine 260 together coordinate substrate.

The protein belongs to the glutaminase family. Homotetramer.

It carries out the reaction L-glutamine + H2O = L-glutamate + NH4(+). The sequence is that of Glutaminase from Aeromonas hydrophila subsp. hydrophila (strain ATCC 7966 / DSM 30187 / BCRC 13018 / CCUG 14551 / JCM 1027 / KCTC 2358 / NCIMB 9240 / NCTC 8049).